The chain runs to 390 residues: Alcohol dehydrogenase-like 7 (390 aa).

Positions 56, 58, 78, 108, 111, 114, 122, and 187 each coordinate Zn(2+). Positions 58 and 78 each coordinate an alcohol. Ser58 lines the NAD(+) pocket. Residues 212–217, Asp236, Lys241, 306–308, Phe334, and Arg384 each bind NAD(+); these read GLGSIG and LGV.

The protein belongs to the zinc-containing alcohol dehydrogenase family. Class-III subfamily. In terms of assembly, homodimer. It depends on Zn(2+) as a cofactor.

It localises to the cytoplasm. It carries out the reaction a primary alcohol + NAD(+) = an aldehyde + NADH + H(+). The catalysed reaction is a secondary alcohol + NAD(+) = a ketone + NADH + H(+). The protein is Alcohol dehydrogenase-like 7 of Arabidopsis thaliana (Mouse-ear cress).